Here is a 407-residue protein sequence, read N- to C-terminus: [Pyruvate dehydrogenase (acetyl-transferring)] kinase isozyme 2, mitochondrial (407 aa).

The Histidine kinase domain occupies 135–364 (LEYKDTYGDD…DAVIYLKALS (230 aa)). Residues tyrosine 215 and tyrosine 216 each carry the phosphotyrosine modification. ATP contacts are provided by residues 251–258 (ELFKNAMR), aspartate 290, 309–310 (ST), and 325–330 (GFGYGL). Lysine 376 carries the N6-succinyllysine modification.

Belongs to the PDK/BCKDK protein kinase family. In terms of assembly, homodimer, and heterodimer with PDK1. Interacts with the pyruvate dehydrogenase complex subunit DLAT, and is part of the multimeric pyruvate dehydrogenase complex that contains multiple copies of pyruvate dehydrogenase (E1), dihydrolipoamide acetyltransferase (DLAT, E2) and lipoamide dehydrogenase (DLD, E3). Detected in heart (at protein level).

The protein localises to the mitochondrion matrix. The catalysed reaction is L-seryl-[pyruvate dehydrogenase E1 alpha subunit] + ATP = O-phospho-L-seryl-[pyruvate dehydrogenase E1 alpha subunit] + ADP + H(+). Kinase that plays a key role in the regulation of glucose and fatty acid metabolism and homeostasis via phosphorylation of the pyruvate dehydrogenase subunits PDHA1 and PDHA2. This inhibits pyruvate dehydrogenase activity, and thereby regulates metabolite flux through the tricarboxylic acid cycle, down-regulates aerobic respiration and inhibits the formation of acetyl-coenzyme A from pyruvate. Inhibition of pyruvate dehydrogenase decreases glucose utilization and increases fat metabolism. Mediates cellular responses to insulin. Plays an important role in maintaining normal blood glucose levels and in metabolic adaptation to nutrient availability. Via its regulation of pyruvate dehydrogenase activity, plays an important role in maintaining normal blood pH and in preventing the accumulation of ketone bodies under starvation. Plays a role in the regulation of cell proliferation and in resistance to apoptosis under oxidative stress. Plays a role in p53/TP53-mediated apoptosis. This Mus musculus (Mouse) protein is [Pyruvate dehydrogenase (acetyl-transferring)] kinase isozyme 2, mitochondrial (Pdk2).